The following is a 593-amino-acid chain: NADH-quinone oxidoreductase subunit C/D (593 aa).

An NADH dehydrogenase I subunit C region spans residues 1 to 184 (MTADNAIFIP…DPYSLTLAKQ (184 aa)). Positions 208–593 (DYMFLNLGPN…IDFVMADVDR (386 aa)) are NADH dehydrogenase I subunit D.

In the N-terminal section; belongs to the complex I 30 kDa subunit family. The protein in the C-terminal section; belongs to the complex I 49 kDa subunit family. NDH-1 is composed of 13 different subunits. Subunits NuoB, CD, E, F, and G constitute the peripheral sector of the complex.

It is found in the cell inner membrane. It catalyses the reaction a quinone + NADH + 5 H(+)(in) = a quinol + NAD(+) + 4 H(+)(out). NDH-1 shuttles electrons from NADH, via FMN and iron-sulfur (Fe-S) centers, to quinones in the respiratory chain. The immediate electron acceptor for the enzyme in this species is believed to be ubiquinone. Couples the redox reaction to proton translocation (for every two electrons transferred, four hydrogen ions are translocated across the cytoplasmic membrane), and thus conserves the redox energy in a proton gradient. This chain is NADH-quinone oxidoreductase subunit C/D, found in Pseudomonas putida (strain ATCC 47054 / DSM 6125 / CFBP 8728 / NCIMB 11950 / KT2440).